The primary structure comprises 446 residues: NADP-specific glutamate dehydrogenase (446 aa).

3 residues coordinate substrate: Lys-92, Gln-113, and Lys-116. Lys-128 functions as the Proton donor in the catalytic mechanism. Gly-167 is a substrate binding site. Thr-211 and Asn-242 together coordinate NADP(+). Substrate is bound at residue Ser-379.

The protein belongs to the Glu/Leu/Phe/Val dehydrogenases family. Homohexamer.

It catalyses the reaction L-glutamate + NADP(+) + H2O = 2-oxoglutarate + NH4(+) + NADPH + H(+). Catalyzes the reversible oxidative deamination of glutamate to a-ketoglutarate and ammonia. The polypeptide is NADP-specific glutamate dehydrogenase (gdhA) (Unknown prokaryotic organism).